A 341-amino-acid chain; its full sequence is GTPase Obg (341 aa).

The Obg domain maps to 1-159; it reads MKFLDQAKIY…RTIWLRLKLI (159 aa). An OBG-type G domain is found at 160–327; it reads ADAGLVGLPN…TLRQLARIID (168 aa). GTP-binding positions include 166 to 173, 191 to 195, 212 to 215, 279 to 282, and 308 to 310; these read GLPNAGKS, FTTLH, DIPG, SQVD, and SAV. 2 residues coordinate Mg(2+): serine 173 and threonine 193.

The protein belongs to the TRAFAC class OBG-HflX-like GTPase superfamily. OBG GTPase family. Monomer. The cofactor is Mg(2+).

It is found in the cytoplasm. In terms of biological role, an essential GTPase which binds GTP, GDP and possibly (p)ppGpp with moderate affinity, with high nucleotide exchange rates and a fairly low GTP hydrolysis rate. Plays a role in control of the cell cycle, stress response, ribosome biogenesis and in those bacteria that undergo differentiation, in morphogenesis control. This is GTPase Obg from Brucella abortus biovar 1 (strain 9-941).